Consider the following 669-residue polypeptide: DNA ligase (669 aa).

NAD(+) contacts are provided by residues 34–38, 83–84, and Glu114; these read DAEYD and SL. The active-site N6-AMP-lysine intermediate is Lys116. Residues Arg137, Glu171, Lys287, and Lys311 each contribute to the NAD(+) site. Cys405, Cys408, Cys423, and Cys428 together coordinate Zn(2+). A BRCT domain is found at 591 to 669; sequence NVESYFAGKT…EERFLQELNK (79 aa).

It belongs to the NAD-dependent DNA ligase family. LigA subfamily. Mg(2+) serves as cofactor. Requires Mn(2+) as cofactor.

The catalysed reaction is NAD(+) + (deoxyribonucleotide)n-3'-hydroxyl + 5'-phospho-(deoxyribonucleotide)m = (deoxyribonucleotide)n+m + AMP + beta-nicotinamide D-nucleotide.. Functionally, DNA ligase that catalyzes the formation of phosphodiester linkages between 5'-phosphoryl and 3'-hydroxyl groups in double-stranded DNA using NAD as a coenzyme and as the energy source for the reaction. It is essential for DNA replication and repair of damaged DNA. The polypeptide is DNA ligase (Bacillus cereus (strain AH187)).